The primary structure comprises 1181 residues: DNA-directed RNA polymerase subunit beta' (1181 aa).

Positions 68, 70, 83, and 86 each coordinate Zn(2+). D457, D459, and D461 together coordinate Mg(2+). 4 residues coordinate Zn(2+): C802, C876, C883, and C886.

The protein belongs to the RNA polymerase beta' chain family. The RNAP catalytic core consists of 2 alpha, 1 beta, 1 beta' and 1 omega subunit. When a sigma factor is associated with the core the holoenzyme is formed, which can initiate transcription. Mg(2+) serves as cofactor. Requires Zn(2+) as cofactor.

The catalysed reaction is RNA(n) + a ribonucleoside 5'-triphosphate = RNA(n+1) + diphosphate. DNA-dependent RNA polymerase catalyzes the transcription of DNA into RNA using the four ribonucleoside triphosphates as substrates. The protein is DNA-directed RNA polymerase subunit beta' of Syntrophomonas wolfei subsp. wolfei (strain DSM 2245B / Goettingen).